The sequence spans 130 residues: Holo-[acyl-carrier-protein] synthase (130 aa).

Mg(2+) is bound by residues D9 and E58.

The protein belongs to the P-Pant transferase superfamily. AcpS family. Mg(2+) serves as cofactor.

Its subcellular location is the cytoplasm. It catalyses the reaction apo-[ACP] + CoA = holo-[ACP] + adenosine 3',5'-bisphosphate + H(+). Transfers the 4'-phosphopantetheine moiety from coenzyme A to a Ser of acyl-carrier-protein. This Mycobacterium sp. (strain JLS) protein is Holo-[acyl-carrier-protein] synthase.